Consider the following 118-residue polypeptide: Small ribosomal subunit protein bS6 (118 aa).

The protein belongs to the bacterial ribosomal protein bS6 family.

Its function is as follows. Binds together with bS18 to 16S ribosomal RNA. This chain is Small ribosomal subunit protein bS6, found in Parabacteroides distasonis (strain ATCC 8503 / DSM 20701 / CIP 104284 / JCM 5825 / NCTC 11152).